The following is a 281-amino-acid chain: UPF0046 protein C25E10.12 (281 aa).

It belongs to the UPF0046 family.

The sequence is that of UPF0046 protein C25E10.12 from Caenorhabditis elegans.